Reading from the N-terminus, the 309-residue chain is Ribosomal RNA small subunit methyltransferase H (309 aa).

S-adenosyl-L-methionine contacts are provided by residues Gly-33–His-35, Asp-53, Phe-79, Asp-100, and Gln-107.

Belongs to the methyltransferase superfamily. RsmH family.

The protein localises to the cytoplasm. It catalyses the reaction cytidine(1402) in 16S rRNA + S-adenosyl-L-methionine = N(4)-methylcytidine(1402) in 16S rRNA + S-adenosyl-L-homocysteine + H(+). Its function is as follows. Specifically methylates the N4 position of cytidine in position 1402 (C1402) of 16S rRNA. The polypeptide is Ribosomal RNA small subunit methyltransferase H (Clostridium botulinum (strain Okra / Type B1)).